The sequence spans 590 residues: V-type ATP synthase alpha chain (590 aa).

231–238 (GPFGSGKT) lines the ATP pocket.

This sequence belongs to the ATPase alpha/beta chains family.

The enzyme catalyses ATP + H2O + 4 H(+)(in) = ADP + phosphate + 5 H(+)(out). Functionally, produces ATP from ADP in the presence of a proton gradient across the membrane. The V-type alpha chain is a catalytic subunit. This chain is V-type ATP synthase alpha chain, found in Clostridium botulinum (strain ATCC 19397 / Type A).